Here is a 102-residue protein sequence, read N- to C-terminus: Large ribosomal subunit protein uL24 (102 aa).

It belongs to the universal ribosomal protein uL24 family. In terms of assembly, part of the 50S ribosomal subunit.

In terms of biological role, one of two assembly initiator proteins, it binds directly to the 5'-end of the 23S rRNA, where it nucleates assembly of the 50S subunit. Functionally, one of the proteins that surrounds the polypeptide exit tunnel on the outside of the subunit. The chain is Large ribosomal subunit protein uL24 from Rhizobium etli (strain CIAT 652).